The following is an 857-amino-acid chain: Bifunctional uridylyltransferase/uridylyl-removing enzyme (857 aa).

Residues 1 to 322 (MDTTPELLLC…FPSESMVTRE (322 aa)) form a uridylyltransferase region. A uridylyl-removing region spans residues 323–679 (INDRFVERQG…ARISPAGEGL (357 aa)). The 123-residue stretch at 441–563 (VDQHILMVVR…VGNGRYLTAL (123 aa)) folds into the HD domain. 2 ACT domains span residues 680 to 760 (QVAV…DPTQ) and 788 to 857 (LLSV…ALAI).

The protein belongs to the GlnD family. Requires Mg(2+) as cofactor.

The catalysed reaction is [protein-PII]-L-tyrosine + UTP = [protein-PII]-uridylyl-L-tyrosine + diphosphate. It catalyses the reaction [protein-PII]-uridylyl-L-tyrosine + H2O = [protein-PII]-L-tyrosine + UMP + H(+). Its activity is regulated as follows. Uridylyltransferase (UTase) activity is inhibited by glutamine, while glutamine activates uridylyl-removing (UR) activity. Its function is as follows. Modifies, by uridylylation and deuridylylation, the PII regulatory proteins (GlnB and homologs), in response to the nitrogen status of the cell that GlnD senses through the glutamine level. Under low glutamine levels, catalyzes the conversion of the PII proteins and UTP to PII-UMP and PPi, while under higher glutamine levels, GlnD hydrolyzes PII-UMP to PII and UMP (deuridylylation). Thus, controls uridylylation state and activity of the PII proteins, and plays an important role in the regulation of nitrogen assimilation and metabolism. The polypeptide is Bifunctional uridylyltransferase/uridylyl-removing enzyme (Cupriavidus metallidurans (strain ATCC 43123 / DSM 2839 / NBRC 102507 / CH34) (Ralstonia metallidurans)).